Reading from the N-terminus, the 430-residue chain is DNA-binding protein cre-1 (430 aa).

The span at 1–19 (MQRVQSAVDFSNLLNPSES) shows a compositional bias: polar residues. Disordered stretches follow at residues 1–77 (MQRV…LPRP), 97–187 (IRTH…PHSY), 265–340 (SRSH…RNLS), and 357–430 (LDGQ…MDRL). Over residues 30–46 (PRQQTAQPQQQQQQPQP) the composition is skewed to low complexity. 2 C2H2-type zinc fingers span residues 78–100 (YKCPLCDKAFHRLEHQTRHIRTH) and 106–130 (HACQFPGCSKKFSRSDELTRHSRIH). Positions 97 to 106 (IRTHTGEKPH) are enriched in basic and acidic residues. Polar residues-rich tracts occupy residues 130–147 (HSNPNSRRGNKGQQQQQH) and 175–187 (AMSSPNVSPPHSY). The span at 268–277 (HSHEDHDDHY) shows a compositional bias: basic and acidic residues. The span at 289 to 303 (PNSPNSTAPSSPTFS) shows a compositional bias: low complexity. Over residues 412–422 (SVRNSSSTSLS) the composition is skewed to polar residues.

It belongs to the creA/MIG C2H2-type zinc-finger protein family.

The protein localises to the nucleus. Functionally, involved in carbon catabolite repression. Represses the transcription of a number of genes by binding to a GC-rich region in their promoter. The polypeptide is DNA-binding protein cre-1 (cre-1) (Neurospora crassa (strain ATCC 24698 / 74-OR23-1A / CBS 708.71 / DSM 1257 / FGSC 987)).